The following is a 74-amino-acid chain: Large ribosomal subunit protein bL31 (74 aa).

The Zn(2+) site is built by Cys-16, Cys-18, Cys-38, and Cys-41.

It belongs to the bacterial ribosomal protein bL31 family. Type A subfamily. Part of the 50S ribosomal subunit. Zn(2+) is required as a cofactor.

In terms of biological role, binds the 23S rRNA. In Salinispora tropica (strain ATCC BAA-916 / DSM 44818 / JCM 13857 / NBRC 105044 / CNB-440), this protein is Large ribosomal subunit protein bL31.